The following is a 353-amino-acid chain: Photosystem II D2 protein (353 aa).

At Thr-2 the chain carries N-acetylthreonine. Thr-2 bears the Phosphothreonine mark. Residues 41–61 form a helical membrane-spanning segment; it reads CAYFSLGGWFTGTTFVTSWYT. A chlorophyll a-binding site is contributed by His-118. The helical transmembrane segment at 125–141 threads the bilayer; the sequence is GFMLRQFELARSVQLRP. 2 residues coordinate pheophytin a: Gln-130 and Asn-143. The helical transmembrane segment at 153–166 threads the bilayer; the sequence is VFVSVFLIYPLGQS. Chlorophyll a is bound at residue His-198. The chain crosses the membrane as a helical span at residues 208–228; the sequence is AALLCAIHGATVENTLFEDGD. Positions 215 and 262 each coordinate a plastoquinone. His-215 is a binding site for Fe cation. His-269 is a binding site for Fe cation. The chain crosses the membrane as a helical span at residues 279–295; sequence GLWMSAIGVVGLALNLR.

This sequence belongs to the reaction center PufL/M/PsbA/D family. PSII is composed of 1 copy each of membrane proteins PsbA, PsbB, PsbC, PsbD, PsbE, PsbF, PsbH, PsbI, PsbJ, PsbK, PsbL, PsbM, PsbT, PsbX, PsbY, PsbZ, Psb30/Ycf12, at least 3 peripheral proteins of the oxygen-evolving complex and a large number of cofactors. It forms dimeric complexes. The D1/D2 heterodimer binds P680, chlorophylls that are the primary electron donor of PSII, and subsequent electron acceptors. It shares a non-heme iron and each subunit binds pheophytin, quinone, additional chlorophylls, carotenoids and lipids. There is also a Cl(-1) ion associated with D1 and D2, which is required for oxygen evolution. The PSII complex binds additional chlorophylls, carotenoids and specific lipids. is required as a cofactor.

The protein resides in the plastid. Its subcellular location is the chloroplast thylakoid membrane. The enzyme catalyses 2 a plastoquinone + 4 hnu + 2 H2O = 2 a plastoquinol + O2. Functionally, photosystem II (PSII) is a light-driven water:plastoquinone oxidoreductase that uses light energy to abstract electrons from H(2)O, generating O(2) and a proton gradient subsequently used for ATP formation. It consists of a core antenna complex that captures photons, and an electron transfer chain that converts photonic excitation into a charge separation. The D1/D2 (PsbA/PsbD) reaction center heterodimer binds P680, the primary electron donor of PSII as well as several subsequent electron acceptors. D2 is needed for assembly of a stable PSII complex. The polypeptide is Photosystem II D2 protein (Physcomitrium patens (Spreading-leaved earth moss)).